The primary structure comprises 316 residues: E3 ubiquitin-protein ligase rnf146 (316 aa).

The segment at 36–74 (CAICLQTCVHPVSLPCKHIFCYLCVKGASWLGRRCALCR) adopts an RING-type zinc-finger fold. The WWE domain maps to 91–167 (EELKSASRGN…EHGRRRKIKR (77 aa)). A glycoprotein is bound by residues tyrosine 107, arginine 110, tryptophan 114, tyrosine 144, glutamine 153, arginine 163, and lysine 175. The interval 257-316 (GRNNIGEGEEGQPLINARMPAPSALLEESEPSDSNDHGSPTLQHNSLLVPQSNRLPFGNP) is disordered. A compositionally biased stretch (polar residues) spans 293 to 310 (HGSPTLQHNSLLVPQSNR).

It is found in the cytoplasm. It localises to the cytosol. The protein localises to the nucleus. The catalysed reaction is S-ubiquitinyl-[E2 ubiquitin-conjugating enzyme]-L-cysteine + [acceptor protein]-L-lysine = [E2 ubiquitin-conjugating enzyme]-L-cysteine + N(6)-ubiquitinyl-[acceptor protein]-L-lysine.. It functions in the pathway protein modification; protein ubiquitination. In terms of biological role, E3 ubiquitin-protein ligase that specifically binds poly-ADP-ribosylated proteins and mediates their ubiquitination and subsequent degradation. May regulate many important biological processes, such as cell survival and DNA damage response. Acts as an activator of the Wnt signaling pathway by mediating the ubiquitination of poly-ADP-ribosylated proteins. Neuroprotective protein. Protects against cell death induced by DNA damaging agents and rescues cells from G1 arrest. Promotes cell survival after gamma-irradiation. Facilitates DNA repair. In Xenopus tropicalis (Western clawed frog), this protein is E3 ubiquitin-protein ligase rnf146 (rnf146).